Here is a 344-residue protein sequence, read N- to C-terminus: Heptahelical transmembrane protein 3 (344 aa).

Residues 1-76 lie on the Cytoplasmic side of the membrane; that stretch reads MKRRRSAKKS…AFSWHNETLN (76 aa). A helical transmembrane segment spans residues 77-97; the sequence is IWTHLIGFGIFLWMTVVSCLE. Residues 98–147 lie on the Extracellular side of the membrane; the sequence is TTEISLAGVFNGMAGVRICLSSNQTLLHDSNVTHHISCLTSQGEAIPKWP. A helical membrane pass occupies residues 148-168; that stretch reads WLVYLVGAMGCLICSSVSHLL. Over 169-184 the chain is Cytoplasmic; it reads ACHSKRFNVFFWRLDY. A helical membrane pass occupies residues 185 to 205; it reads AGISLMIVASFFAPIYYAFSC. Residues 206–210 lie on the Extracellular side of the membrane; sequence HPNFR. The helical transmembrane segment at 211 to 231 threads the bilayer; sequence LLYLSSISILGLLAIITLLSP. Residues 232–244 are Cytoplasmic-facing; the sequence is ALSTPRFRPFRAN. A helical membrane pass occupies residues 245–265; it reads LFLAMGSSAVIPATHVLCLYW. At 266-269 the chain is on the extracellular side; sequence DHPN. A helical membrane pass occupies residues 270–290; that stretch reads VFIALGYEIATALSYFVGATF. At 291–312 the chain is on the cytoplasmic side; it reads YVSRVPERWKPGAFDMAGHSHQ. Residues 313 to 333 form a helical membrane-spanning segment; the sequence is IFHVFVVMGALAHCVTTLLII. Residues 334–344 lie on the Extracellular side of the membrane; sequence DFSRASPSCGF.

The protein belongs to the ADIPOR family. As to expression, expressed in roots and flowers.

The protein resides in the membrane. Functionally, may play a role in abiotic stress response. The chain is Heptahelical transmembrane protein 3 (HHP3) from Arabidopsis thaliana (Mouse-ear cress).